A 181-amino-acid polypeptide reads, in one-letter code: Adenylate kinase 2 (181 aa).

10 to 15 is a binding site for ATP; it reads GSGKST. Positions 30–59 are NMP; sequence SMGGILREAIANATPLGIKAKPYVERGDLL. Residues Arg36, 57-59, 85-88, and Gln92 each bind AMP; these read DLL and GYPR. Residues 126–132 form an LID region; the sequence is NRSLFDD. Residue Arg127 coordinates ATP. AMP is bound at residue Arg140. An ATP-binding site is contributed by Pro168.

This sequence belongs to the adenylate kinase family. Monomer.

The protein localises to the cytoplasm. The enzyme catalyses AMP + ATP = 2 ADP. The protein operates within purine metabolism; AMP biosynthesis via salvage pathway; AMP from ADP: step 1/1. Functionally, catalyzes the reversible transfer of the terminal phosphate group between ATP and AMP. Plays an important role in cellular energy homeostasis and in adenine nucleotide metabolism. The sequence is that of Adenylate kinase 2 from Synechocystis sp. (strain ATCC 27184 / PCC 6803 / Kazusa).